The chain runs to 176 residues: Putative phosphohydrolase YueE (176 aa).

Residues 23-139 (GVAHAIACAY…VKKADELDEE (117 aa)) form the HD domain.

The protein is Putative phosphohydrolase YueE (yueE) of Bacillus subtilis (strain 168).